The primary structure comprises 584 residues: 65 kDa membrane protein (584 aa).

The first 30 residues, 1-30 (MKFKSLITTTLALGVLASTGANFNNNEASA), serve as a signal peptide directing secretion. MAP repeat units follow at residues 45–154 (GYSK…EDKK), 156–265 (DKAN…ENKA), 266–374 (KRNY…KADR), 375–474 (YVPY…TGTK), and 475–584 (AKAD…KKNK).

The protein localises to the cell membrane. In terms of biological role, binds various plasma and ECM-proteins. This chain is 65 kDa membrane protein, found in Staphylococcus aureus (strain Newman).